The chain runs to 443 residues: ATP-dependent protease ATPase subunit HslU (443 aa).

ATP contacts are provided by residues isoleucine 18, 60–65 (GVGKTE), aspartate 256, glutamate 321, and arginine 393.

Belongs to the ClpX chaperone family. HslU subfamily. In terms of assembly, a double ring-shaped homohexamer of HslV is capped on each side by a ring-shaped HslU homohexamer. The assembly of the HslU/HslV complex is dependent on binding of ATP.

It is found in the cytoplasm. Functionally, ATPase subunit of a proteasome-like degradation complex; this subunit has chaperone activity. The binding of ATP and its subsequent hydrolysis by HslU are essential for unfolding of protein substrates subsequently hydrolyzed by HslV. HslU recognizes the N-terminal part of its protein substrates and unfolds these before they are guided to HslV for hydrolysis. In Shigella boydii serotype 18 (strain CDC 3083-94 / BS512), this protein is ATP-dependent protease ATPase subunit HslU.